Consider the following 169-residue polypeptide: Podoplanin (169 aa).

Residues 1–22 (MWRVPVLLLVLGGAGLRVPAAG) form the signal peptide. Over 23–138 (ASTVRPDDII…EKDGLATVTL (116 aa)) the chain is Extracellular. Thr25 is a glycosylation site (O-linked (GalNAc...) threonine). A disordered region spans residues 37–69 (DSVVTPGTEDSVVTPGAEDNVVTDGATEEPYES). An O-linked (GalNAc...) serine glycan is attached at Ser38. 2 O-linked (GalNAc...) threonine glycosylation sites follow: Thr41 and Thr44. The O-linked (GalNAc...) serine glycan is linked to Ser47. O-linked (GalNAc...) threonine glycosylation is found at Thr50, Thr59, Thr63, Thr72, Thr76, Thr79, Thr83, Thr92, Thr96, Thr106, Thr107, Thr108, Thr113, Thr126, and Thr127. A helical membrane pass occupies residues 139–159 (VGIIVGVLLAIGFIGGIIIVV). The requires for dimerization and lipid rafts association stretch occupies residues 140-144 (GIIVG). Residues 160-169 (ARKMSGRYSP) are Cytoplasmic-facing. The tract at residues 161-162 (RK) is requires for interaction with MSN and EZR.

The protein belongs to the podoplanin family. In terms of assembly, homodimer. Interacts with CLEC1B; the interaction is independent of CLEC1B glycosylation and activates CLEC1B; the interaction is dependent of sialic acid on O-glycans. Interacts with CD9; this interaction is homophilic and attenuates platelet aggregation and pulmonary metastasis induced by PDPN. Interacts with LGALS8; the interaction is glycosylation-dependent; may participate in connection of the lymphatic endothelium to the surrounding extracellular matrix. Interacts with HSPA9. Interacts (via extracellular domain) with CD44; this interaction is required for PDPN-mediated directional migration and regulation of lamellipodia extension/stabilization during cell spreading and migration. Interacts (via cytoplasmic domain) with MSN and EZR; activates RHOA and promotes epithelial-mesenchymal transition. Interacts with CCL21; relocalized PDPN to the basolateral membrane. Post-translationally, extensively O-glycosylated. Contains sialic acid residues. O-glycosylation is necessary for platelet aggregation activity. Disialylated at Thr-59; sialic acid is critical for platelet-aggregating activity and for CLEC1B interaction. In terms of processing, the N-terminus is blocked.

Its subcellular location is the membrane. The protein localises to the cell projection. It localises to the filopodium membrane. The protein resides in the lamellipodium membrane. It is found in the microvillus membrane. Its subcellular location is the ruffle membrane. The protein localises to the membrane raft. It localises to the apical cell membrane. The protein resides in the basolateral cell membrane. It is found in the invadopodium. Functionally, mediates effects on cell migration and adhesion through its different partners. During development plays a role in blood and lymphatic vessels separation by binding CLEC1B, triggering CLEC1B activation in platelets and leading to platelet activation and/or aggregation. Interaction with CD9, on the contrary, attenuates platelet aggregation and pulmonary metastasis induced by PDPN. Mediates effects on cell migration and adhesion through its different partners. Through MSN or EZR interaction promotes epithelial-mesenchymal transition (EMT) leading to ERZ phosphorylation and triggering RHOA activation leading to cell migration increase and invasiveness. Interaction with CD44 promotes directional cell migration in epithelial and tumor cells. In lymph nodes (LNs), controls fibroblastic reticular cells (FRCs) adhesion to the extracellular matrix (ECM) and contraction of the actomyosin by maintaining ERM proteins (EZR; MSN and RDX) and MYL9 activation through association with unknown transmembrane proteins. Engagement of CLEC1B by PDPN promotes FRCs relaxation by blocking lateral membrane interactions leading to reduction of ERM proteins (EZR; MSN and RDX) and MYL9 activation. Through binding with LGALS8 may participate in connection of the lymphatic endothelium to the surrounding extracellular matrix. In keratinocytes, induces changes in cell morphology showing an elongated shape, numerous membrane protrusions, major reorganization of the actin cytoskeleton, increased motility and decreased cell adhesion. Controls invadopodia stability and maturation leading to efficient degradation of the extracellular matrix (ECM) in tumor cells through modulation of RHOC activity in order to activate ROCK1/ROCK2 and LIMK1/LIMK2 and inactivation of CFL1. Required for normal lung cell proliferation and alveolus formation at birth. Does not function as a water channel or as a regulator of aquaporin-type water channels. Does not have any effect on folic acid or amino acid transport. The protein is Podoplanin (PDPN) of Canis lupus familiaris (Dog).